Consider the following 1042-residue polypeptide: Protein phosphatase Slingshot homolog 1 (1042 aa).

The segment covering 1 to 12 (MALVTLQRSPTP) has biased composition (polar residues). The segment at 1-29 (MALVTLQRSPTPSAASSSASNSELEAGSD) is disordered. Ala-2 carries the N-acetylalanine modification. The segment covering 13 to 22 (SAASSSASNS) has biased composition (low complexity). Phosphoserine occurs at positions 37 and 57. Residues 249–304 (ERTERLIKAKLRSIMMSQDLENVTSKEIRNELEKQMNCNLKEFKEFIDNEMLLILG) form the DEK-C domain. A Tyrosine-protein phosphatase domain is found at 308 to 449 (KPSLIFDHLY…LSEYEGILDA (142 aa)). The active-site Phosphocysteine intermediate is Cys-393. At Ser-516 the chain carries Phosphoserine. 4 disordered regions span residues 576 to 609 (FGNS…ASTQ), 668 to 766 (MERH…PHCD), 858 to 900 (IPEE…LDHT), and 915 to 942 (PTSS…KPGL). Over residues 675 to 693 (SSSAICTQPTFLPHVTSSP) the composition is skewed to polar residues. Low complexity predominate over residues 697–712 (ASSRSRAPERPASGPA). Over residues 886 to 900 (LQKSPTSTLPRLDHT) the composition is skewed to polar residues. At Ser-889 the chain carries Phosphoserine. The interaction with YWHAG stretch occupies residues 889–1042 (SPTSTLPRLD…LKSPSRVNKS (154 aa)). Low complexity predominate over residues 917–935 (SSSISSNLTRSSSSDSIHS). At Ser-970 the chain carries Phosphoserine. Over residues 985-995 (SSEADTSTIAD) the composition is skewed to polar residues. The segment at 985–1042 (SSEADTSTIADSQDAKCGLSSSFLPEPQSAPRDPAATSKSSGKSAPEHLKSPSRVNKS) is disordered.

It belongs to the protein-tyrosine phosphatase family. As to quaternary structure, interacts with the 14-3-3 proteins YWHAB, YWHAG, YWHAQ, and YWHAZ. Interaction with 14-3-3 proteins inhibits phosphatase activity and also blocks recruitment to lamellipodia and stimulation by actin. Interacts with actin and this stimulates phosphatase activity. Interacts with LIMK1. In terms of processing, phosphorylated. Inhibitory phosphorylation by PAK4 promotes binding to YWHAZ. Phosphorylation at Ser-970 is decreased by stimuli which promote actin reorganization and lamellipodia formation. Can be dephosphorylated and activated by PPP3CA/calcineurin A. Phosphorylation decreases immediately prior to telophase. In terms of tissue distribution, expressed in brain, heart, kidney and thymus. Also expressed at lower levels in liver, skeletal muscle, small intestine and spleen.

The protein localises to the cytoplasm. The protein resides in the cytoskeleton. It is found in the cleavage furrow. It localises to the midbody. It carries out the reaction O-phospho-L-tyrosyl-[protein] + H2O = L-tyrosyl-[protein] + phosphate. The enzyme catalyses O-phospho-L-seryl-[protein] + H2O = L-seryl-[protein] + phosphate. The catalysed reaction is O-phospho-L-threonyl-[protein] + H2O = L-threonyl-[protein] + phosphate. Protein phosphatase which regulates actin filament dynamics. Dephosphorylates and activates the actin binding/depolymerizing factor cofilin, which subsequently binds to actin filaments and stimulates their disassembly. Inhibitory phosphorylation of cofilin is mediated by LIMK1, which may also be dephosphorylated and inactivated by this protein. This is Protein phosphatase Slingshot homolog 1 from Mus musculus (Mouse).